The following is a 912-amino-acid chain: Phosphatidylinositol-3-phosphatase SAC1 (912 aa).

Positions 1–29 (MAKSENSTTSTFSSFANKIQPSNDAESDP) are disordered. The SAC domain occupies 173-575 (LSSVDLTKDF…GDALAQQYGG (403 aa)). The Phosphatase catalytic core signature appears at 511–522 (RTNCIDCLDRTN). Residues 715 to 912 (RPGGNTGSTG…VGDDKVPKVI (198 aa)) form a required for subcellular localization region. Positions 740 to 766 (LFGSRKPEESSSATKSGADDSEKGVTS) are disordered.

As to quaternary structure, component of the PI(3,5)P2 regulatory complex at least composed of ATG18, SAC/FIG4, FAB1 and VAC14. It depends on Mg(2+) as a cofactor. Ubiquitous with higher expression level in both young elongating and nonelongating stems. Detected in vascular tissues.

The protein localises to the vacuole membrane. The protein resides in the golgi apparatus. It catalyses the reaction a 1,2-diacyl-sn-glycero-3-phospho-(1D-myo-inositol-3-phosphate) + H2O = a 1,2-diacyl-sn-glycero-3-phospho-(1D-myo-inositol) + phosphate. The catalysed reaction is a 1,2-diacyl-sn-glycero-3-phospho-(1D-myo-inositol-3,5-bisphosphate) + H2O = a 1,2-diacyl-sn-glycero-3-phospho-(1D-myo-inositol-3-phosphate) + phosphate. It carries out the reaction a 1,2-diacyl-sn-glycero-3-phospho-(1D-myo-inositol 4-phosphate) + H2O = a 1,2-diacyl-sn-glycero-3-phospho-(1D-myo-inositol) + phosphate. Functionally, phosphoinositide phosphatase which catalyzes the hydrolysis of phosphatidylinositol-3,5-bisphosphate (PtdIns(3,5)P2). Can also catalyze the hydrolysis of phosphatidylinositol 3-phosphate (PtdIns(3)P) and phosphatidylinositol 4-phosphate (PtdIns(4)P). Required for normal cell morphogenesis, cell wall synthesis, and actin organization. This Arabidopsis thaliana (Mouse-ear cress) protein is Phosphatidylinositol-3-phosphatase SAC1 (SAC1).